Consider the following 879-residue polypeptide: Alanine--tRNA ligase (879 aa).

Zn(2+) contacts are provided by His566, His570, Cys668, and His672.

Belongs to the class-II aminoacyl-tRNA synthetase family. Requires Zn(2+) as cofactor.

It is found in the cytoplasm. It carries out the reaction tRNA(Ala) + L-alanine + ATP = L-alanyl-tRNA(Ala) + AMP + diphosphate. In terms of biological role, catalyzes the attachment of alanine to tRNA(Ala) in a two-step reaction: alanine is first activated by ATP to form Ala-AMP and then transferred to the acceptor end of tRNA(Ala). Also edits incorrectly charged Ser-tRNA(Ala) and Gly-tRNA(Ala) via its editing domain. The chain is Alanine--tRNA ligase from Clostridium tetani (strain Massachusetts / E88).